A 249-amino-acid chain; its full sequence is Granaticin polyketide synthase putative ketoacyl reductase 2 (249 aa).

12–36 is a binding site for NAD(+); sequence LVTGSSSGIGQTVAQRLAAEGYRVV. Ser144 provides a ligand contact to substrate. The active-site Proton acceptor is Tyr157.

It belongs to the short-chain dehydrogenases/reductases (SDR) family.

It functions in the pathway antibiotic biosynthesis; granaticin biosynthesis. This Streptomyces violaceoruber protein is Granaticin polyketide synthase putative ketoacyl reductase 2 (gra-orf6).